The primary structure comprises 264 residues: Anamorsin homolog 2 (264 aa).

The segment at 1 to 142 is N-terminal SAM-like domain; it reads MAATAAALAV…KVSWSMGSSF (142 aa). The tract at residues 143-174 is linker; it reads PLKKATKGLPKIQIDDDSELIDEDSLLTEDDL. [2Fe-2S] cluster-binding residues include Cys-185, Cys-194, Cys-197, and Cys-199. Positions 185 to 199 are fe-S binding site A; that stretch reads CEVGATRKACKNCTC. Positions 225, 228, 236, and 239 each coordinate [4Fe-4S] cluster. 2 consecutive short sequence motifs (cx2C motif) follow at residues 225–228 and 236–239; these read CGNC and CGTC. Residues 225-239 are fe-S binding site B; it reads CGNCGLGDAFRCGTC.

This sequence belongs to the anamorsin family. Monomer. [2Fe-2S] cluster is required as a cofactor. The cofactor is [4Fe-4S] cluster.

The protein localises to the cytoplasm. It is found in the mitochondrion intermembrane space. Component of the cytosolic iron-sulfur (Fe-S) protein assembly (CIA) machinery. Required for the maturation of extramitochondrial Fe-S proteins. Part of an electron transfer chain functioning in an early step of cytosolic Fe-S biogenesis, facilitating the de novo assembly of a [4Fe-4S] cluster on the cytosolic Fe-S scaffold complex. Electrons are transferred from NADPH via a FAD- and FMN-containing diflavin oxidoreductase. Together with the diflavin oxidoreductase, also required for the assembly of the diferric tyrosyl radical cofactor of ribonucleotide reductase (RNR), probably by providing electrons for reduction during radical cofactor maturation in the catalytic small subunit. In Oryza sativa subsp. indica (Rice), this protein is Anamorsin homolog 2.